The following is a 636-amino-acid chain: ATP-dependent zinc metalloprotease FtsH 1 (636 aa).

Topologically, residues 1–18 (MKLSPPKKNLPPQKNNEP) are cytoplasmic. The chain crosses the membrane as a helical span at residues 19 to 39 (PFPYLRLLVQVGIALFLVWIW). Residues 40-126 (QESLHKATVS…YGSVKPSLLS (87 aa)) are Periplasmic-facing. A helical transmembrane segment spans residues 127–147 (QILFSWVVPILIFFLVWFALA). Residues 148–636 (RFMGGGGAGY…KEAPSYSSTL (489 aa)) are Cytoplasmic-facing. 220–227 (GPPGTGKT) is a binding site for ATP. Histidine 442 is a binding site for Zn(2+). Glutamate 443 is an active-site residue. Positions 446 and 519 each coordinate Zn(2+).

This sequence in the central section; belongs to the AAA ATPase family. The protein in the C-terminal section; belongs to the peptidase M41 family. As to quaternary structure, homohexamer. It depends on Zn(2+) as a cofactor.

Its subcellular location is the cell inner membrane. Functionally, acts as a processive, ATP-dependent zinc metallopeptidase for both cytoplasmic and membrane proteins. Plays a role in the quality control of integral membrane proteins. The sequence is that of ATP-dependent zinc metalloprotease FtsH 1 from Methylacidiphilum infernorum (isolate V4) (Methylokorus infernorum (strain V4)).